The following is a 276-amino-acid chain: Merozoite surface protein 2 (276 aa).

The N-terminal stretch at 1-20 (MKVIKTLSIINFFIFVTFNI) is a signal peptide. 2 N-linked (GlcNAc...) asparagine glycosylation sites follow: N22 and N36. The interval 44-202 (AESNPSTGAG…EQTESPELQS (159 aa)) is polymorphic region. A disordered region spans residues 44–242 (AESNPSTGAG…CTDGNKENCG (199 aa)). The span at 51–90 (GAGGSGSAGGSGSAGGSGSAGGSGSAGGSGSAGSGDGNGA) shows a compositional bias: gly residues. 5 tandem repeats follow at residues 53–58 (GGSGSA), 59–64 (GGSGSA), 65–70 (GGSGSA), 71–76 (GGSGSA), and 77–82 (GGSGSA). A 5 X 6 AA tandem repeats of G-G-S-G-S-A region spans residues 53–82 (GGSGSAGGSGSAGGSGSAGGSGSAGGSGSA). Residues 91–127 (NPGADAERSPSTPATTTTTTTTNDAEASTSTSSENPN) are compositionally biased toward low complexity. Composition is skewed to polar residues over residues 143-169 (KPNQ…NVPP), 176-187 (KSPTAQPEQAEN), and 194-204 (QTESPELQSAP). N153 is a glycosylation site (N-linked (GlcNAc...) asparagine). N225 carries N-linked (GlcNAc...) asparagine glycosylation. Positions 229–238 (SQKECTDGNK) are enriched in basic and acidic residues. A disulfide bridge connects residues C233 and C241. A glycan (N-linked (GlcNAc...) asparagine) is linked at N250. N250 carries GPI-anchor amidated asparagine lipidation. A propeptide spans 251–276 (SSNIASINKFVVLISATLVLSFAIFI) (removed in mature form).

It is found in the cell membrane. Functionally, may play a role in the merozoite attachment to the erythrocyte. In Plasmodium falciparum (isolate 7G8), this protein is Merozoite surface protein 2.